Here is a 409-residue protein sequence, read N- to C-terminus: Elongation factor Tu, chloroplastic (409 aa).

The tr-type G domain maps to 10–214 (KPHINIGTIG…QVDSYIPTPT (205 aa)). Residues 19–26 (GHVDHGKT) form a G1 region. A GTP-binding site is contributed by 19–26 (GHVDHGKT). Threonine 26 is a Mg(2+) binding site. Lysine 57 carries the post-translational modification N6-methyllysine. The G2 stretch occupies residues 60–64 (GITIN). A G3 region spans residues 81–84 (DCPG). Residues 81 to 85 (DCPGH) and 136 to 139 (NKED) contribute to the GTP site. Positions 136–139 (NKED) are G4. Residues 174–176 (SAL) form a G5 region.

This sequence belongs to the TRAFAC class translation factor GTPase superfamily. Classic translation factor GTPase family. EF-Tu/EF-1A subfamily.

The protein resides in the plastid. It is found in the chloroplast. The enzyme catalyses GTP + H2O = GDP + phosphate + H(+). In terms of biological role, GTP hydrolase that promotes the GTP-dependent binding of aminoacyl-tRNA to the A-site of ribosomes during protein biosynthesis. The protein is Elongation factor Tu, chloroplastic (tufA) of Euglena gracilis.